A 78-amino-acid polypeptide reads, in one-letter code: D-alanyl carrier protein (78 aa).

Residues 1–78 form the Carrier domain; the sequence is MEFREQVLDL…KIVEALEELR (78 aa). Ser36 bears the O-(pantetheine 4'-phosphoryl)serine mark.

This sequence belongs to the DltC family. Post-translationally, 4'-phosphopantetheine is transferred from CoA to a specific serine of apo-DCP.

The protein resides in the cytoplasm. Its pathway is cell wall biogenesis; lipoteichoic acid biosynthesis. In terms of biological role, carrier protein involved in the D-alanylation of lipoteichoic acid (LTA). The loading of thioester-linked D-alanine onto DltC is catalyzed by D-alanine--D-alanyl carrier protein ligase DltA. The DltC-carried D-alanyl group is further transferred to cell membrane phosphatidylglycerol (PG) by forming an ester bond, probably catalyzed by DltD. D-alanylation of LTA plays an important role in modulating the properties of the cell wall in Gram-positive bacteria, influencing the net charge of the cell wall. This chain is D-alanyl carrier protein, found in Staphylococcus epidermidis (strain ATCC 35984 / DSM 28319 / BCRC 17069 / CCUG 31568 / BM 3577 / RP62A).